The following is a 211-amino-acid chain: Probable nicotinate-nucleotide adenylyltransferase (211 aa).

It belongs to the NadD family.

It catalyses the reaction nicotinate beta-D-ribonucleotide + ATP + H(+) = deamido-NAD(+) + diphosphate. It functions in the pathway cofactor biosynthesis; NAD(+) biosynthesis; deamido-NAD(+) from nicotinate D-ribonucleotide: step 1/1. Functionally, catalyzes the reversible adenylation of nicotinate mononucleotide (NaMN) to nicotinic acid adenine dinucleotide (NaAD). The protein is Probable nicotinate-nucleotide adenylyltransferase of Legionella pneumophila (strain Lens).